Reading from the N-terminus, the 263-residue chain is Renal glandular kallikrein (263 aa).

A signal peptide spans 1–18; the sequence is MWFLILFLALFLGGIDAA. A propeptide spans 19 to 24 (activation peptide); the sequence is PPVQSR. The Peptidase S1 domain maps to 25-260; sequence IIGGFNCEKN…YRSWIKDVMA (236 aa). 5 disulfide bridges follow: cysteine 31–cysteine 175, cysteine 50–cysteine 66, cysteine 153–cysteine 221, cysteine 186–cysteine 200, and cysteine 211–cysteine 236. Residue histidine 65 is the Charge relay system of the active site. A glycan (N-linked (GlcNAc...) asparagine) is linked at asparagine 102. Aspartate 121 (charge relay system) is an active-site residue. The Charge relay system role is filled by serine 215.

This sequence belongs to the peptidase S1 family. Kallikrein subfamily.

It catalyses the reaction Preferential cleavage of Arg-|-Xaa bonds in small molecule substrates. Highly selective action to release kallidin (lysyl-bradykinin) from kininogen involves hydrolysis of Met-|-Xaa or Leu-|-Xaa.. Functionally, glandular kallikreins cleave Met-Lys and Arg-Ser bonds in kininogen to release Lys-bradykinin. This is Renal glandular kallikrein from Mastomys natalensis (African soft-furred rat).